The sequence spans 208 residues: Uridine kinase (208 aa).

11 to 18 (GGTGSGKS) is an ATP binding site.

It belongs to the uridine kinase family.

The protein resides in the cytoplasm. It carries out the reaction uridine + ATP = UMP + ADP + H(+). It catalyses the reaction cytidine + ATP = CMP + ADP + H(+). The protein operates within pyrimidine metabolism; CTP biosynthesis via salvage pathway; CTP from cytidine: step 1/3. It participates in pyrimidine metabolism; UMP biosynthesis via salvage pathway; UMP from uridine: step 1/1. This Clostridium perfringens (strain ATCC 13124 / DSM 756 / JCM 1290 / NCIMB 6125 / NCTC 8237 / Type A) protein is Uridine kinase.